A 1080-amino-acid chain; its full sequence is ATP-dependent helicase/deoxyribonuclease subunit B (1080 aa).

This sequence belongs to the helicase family. AddB/RexB type 2 subfamily. As to quaternary structure, heterodimer of AddA and RexB. It depends on Mg(2+) as a cofactor.

The heterodimer acts as both an ATP-dependent DNA helicase and an ATP-dependent, dual-direction single-stranded exonuclease. Recognizes the chi site generating a DNA molecule suitable for the initiation of homologous recombination. This subunit has 5' -&gt; 3' nuclease activity but not helicase activity. This chain is ATP-dependent helicase/deoxyribonuclease subunit B, found in Streptococcus mutans serotype c (strain ATCC 700610 / UA159).